A 119-amino-acid chain; its full sequence is Flagellar transcriptional regulator FlhD (119 aa).

The protein belongs to the FlhD family. As to quaternary structure, homodimer; disulfide-linked. Forms a heterohexamer composed of two FlhC and four FlhD subunits. Each FlhC binds a FlhD dimer, forming a heterotrimer, and a hexamer assembles by dimerization of two heterotrimers.

Its subcellular location is the cytoplasm. Functionally, functions in complex with FlhC as a master transcriptional regulator that regulates transcription of several flagellar and non-flagellar operons by binding to their promoter region. Activates expression of class 2 flagellar genes, including fliA, which is a flagellum-specific sigma factor that turns on the class 3 genes. Also regulates genes whose products function in a variety of physiological pathways. The chain is Flagellar transcriptional regulator FlhD from Enterobacter sp. (strain 638).